The sequence spans 351 residues: Protein-glutamate methylesterase/protein-glutamine glutaminase (351 aa).

The Response regulatory domain occupies 8-125 (TVVVVDDSLT…GEDPFAGLGD (118 aa)). D59 is modified (4-aspartylphosphate). In terms of domain architecture, CheB-type methylesterase spans 151–345 (PKIGTVVGIG…PAILNLCERR (195 aa)). Catalysis depends on residues S162, H188, and D287.

Belongs to the CheB family. Post-translationally, phosphorylated by CheA. Phosphorylation of the N-terminal regulatory domain activates the methylesterase activity.

The protein localises to the cytoplasm. It carries out the reaction [protein]-L-glutamate 5-O-methyl ester + H2O = L-glutamyl-[protein] + methanol + H(+). It catalyses the reaction L-glutaminyl-[protein] + H2O = L-glutamyl-[protein] + NH4(+). Its function is as follows. Involved in chemotaxis. Part of a chemotaxis signal transduction system that modulates chemotaxis in response to various stimuli. Catalyzes the demethylation of specific methylglutamate residues introduced into the chemoreceptors (methyl-accepting chemotaxis proteins or MCP) by CheR. Also mediates the irreversible deamidation of specific glutamine residues to glutamic acid. This Gluconobacter oxydans (strain 621H) (Gluconobacter suboxydans) protein is Protein-glutamate methylesterase/protein-glutamine glutaminase.